Here is a 40-residue protein sequence, read N- to C-terminus: AVANCGQVVSYLAPCISYAMGRVSAPGGGCCSGVRGLNAA.

This sequence belongs to the plant LTP family. In terms of processing, phosphorylated by Ca(2+)-dependent protein kinase.

Functionally, plant non-specific lipid-transfer proteins transfer phospholipids as well as galactolipids across membranes. May play a role in wax or cutin deposition in the cell walls of expanding epidermal cells and certain secretory tissues. In Triticum aestivum (Wheat), this protein is Probable non-specific lipid-transfer protein.